A 932-amino-acid polypeptide reads, in one-letter code: Lon protease homolog 2, peroxisomal (932 aa).

One can recognise a Lon N-terminal domain in the interval 11-259 (LALVPLPKGS…RVVELLARQV (249 aa)). The interval 304–340 (TGLTPPGAAGGRNNEDEKETNEVDELQKRLQEAELSP) is disordered. Residues 328–340 (ELQKRLQEAELSP) show a composition bias toward basic and acidic residues. Position 486–493 (486–493 (GPPGTGKT)) interacts with ATP. Residues 729–916 (HGRPGVVTGL…WEAIRQVWPG (188 aa)) enclose the Lon proteolytic domain. Catalysis depends on residues Ser822 and Lys865. A Microbody targeting signal motif is present at residues 930 to 932 (SRL).

The protein belongs to the peptidase S16 family.

Its subcellular location is the peroxisome matrix. It carries out the reaction Hydrolysis of proteins in presence of ATP.. In terms of biological role, ATP-dependent serine protease that mediates the selective degradation of misfolded and unassembled polypeptides in the peroxisomal matrix. Necessary for type 2 peroxisome targeting signal (PTS2)-containing protein processing and facilitates peroxisome matrix protein import. The protein is Lon protease homolog 2, peroxisomal of Aspergillus fumigatus (strain ATCC MYA-4609 / CBS 101355 / FGSC A1100 / Af293) (Neosartorya fumigata).